A 61-amino-acid polypeptide reads, in one-letter code: MTQSCTLTLVLVVAVLAALATAQLNFSAGWGRRYADPNADPMAFLYRLIQIEARKLAGCSD.

An N-terminal signal peptide occupies residues 1–22 (MTQSCTLTLVLVVAVLAALATA). A Pyrrolidone carboxylic acid modification is found at glutamine 23. Residue tryptophan 30 is modified to Tryptophan amide.

It belongs to the AKH/HRTH/RPCH family. As to quaternary structure, adipokinetic hormone precursor-related peptide (APRP) can form three type of disulfide-bond dimers: p1 (alpha-alpha), p2 (alpha-beta), and p3 (beta-beta).

It is found in the secreted. Functionally, this hormone, released from cells in the corpora cardiaca, causes release of diglycerides from the fat body and stimulation of muscles to use these diglycerides as an energy source during energy-demanding processes. The polypeptide is Adipokinetic prohormone type 2 (Locusta migratoria (Migratory locust)).